The sequence spans 301 residues: Averufin oxidase A (301 aa).

The N-terminal stretch at 1–23 (MPTYALLGATGATGSAILRCLLA) is a signal peptide. Asparagine 62, asparagine 86, and asparagine 190 each carry an N-linked (GlcNAc...) asparagine glycan.

Belongs to the avfA family.

It functions in the pathway mycotoxin biosynthesis. Functionally, averufin oxidase A; part of the fragmented gene cluster that mediates the biosynthesis of dothistromin (DOTH), a polyketide toxin very similar in structure to the aflatoxin precursor, versicolorin B. The first step of the pathway is the conversion of acetate to norsolorinic acid (NOR) and requires the fatty acid synthase subunits hexA and hexB, as well as the polyketide synthase pksA. PksA combines a hexanoyl starter unit and 7 malonyl-CoA extender units to synthesize the precursor NOR. The hexanoyl starter unit is provided to the acyl-carrier protein (ACP) domain by the fungal fatty acid synthase hexA/hexB. The second step is the conversion of NOR to averantin (AVN) and requires the norsolorinic acid ketoreductase nor1, which catalyzes the dehydration of norsolorinic acid to form (1'S)-averantin. The cytochrome P450 monooxygenase avnA then catalyzes the hydroxylation of AVN to 5'hydroxyaverantin (HAVN). The next step is performed by adhA that transforms HAVN to averufin (AVF). Averufin might then be converted to hydroxyversicolorone by cypX and avfA. Hydroxyversicolorone is further converted versiconal hemiacetal acetate (VHA) by moxY. VHA is then the substrate for the versiconal hemiacetal acetate esterase est1 to yield versiconal (VAL). Versicolorin B synthase vbsA then converts VAL to versicolorin B (VERB) by closing the bisfuran ring. Then, the activity of the versicolorin B desaturase verB leads to versicolorin A (VERA). DotB, a predicted chloroperoxidase, may perform epoxidation of the A-ring of VERA. Alternatively, a cytochrome P450, such as cypX or avnA could catalyze this step. It is also possible that another, uncharacterized, cytochrome P450 enzyme is responsible for this step. Opening of the epoxide could potentially be achieved by the epoxide hydrolase epoA. However, epoA seems not to be required for DOTH biosynthesis, but other epoxide hydrolases may have the ability to complement this hydrolysis. Alternatively, opening of the epoxide ring could be achieved non-enzymatically. The next step is the deoxygenation of ring A to yield the 5,8-dihydroxyanthraquinone which is most likely catalyzed by the NADPH dehydrogenase encoded by ver1. The last stages of DOTH biosynthesis are proposed to involve hydroxylation of the bisfuran. OrdB and norB might have oxidative roles here. An alternative possibility is that cytochrome P450 monoogenases such as avnA and cypX might perform these steps in addition to previously proposed steps. This chain is Averufin oxidase A, found in Dothistroma septosporum (Red band needle blight fungus).